The primary structure comprises 326 residues: Tetraketide alpha-pyrone reductase 1 (326 aa).

Residues 8-32, lysine 44, and tyrosine 162 contribute to the NADP(+) site; that span reads VCVT…GYEV.

The protein belongs to the NAD(P)-dependent epimerase/dehydratase family. Dihydroflavonol-4-reductase subfamily. In terms of assembly, interacts with 4CLL1/ACOS5, PKSA and PKSB. In terms of tissue distribution, specifically expressed in anther tapetal cells during microspores development.

It localises to the cytoplasm. The protein resides in the nucleus. Its subcellular location is the endoplasmic reticulum. Its function is as follows. Involved in the biosynthesis of hydroxylated tetraketide compounds that serve as sporopollenin precursors (the main constituents of exine). Is essential for pollen wall development. Acts on tetraketide alpha-pyrones and reduces the carbonyl function on the tetraketide alkyl chain to a secondary alcohol function. This chain is Tetraketide alpha-pyrone reductase 1 (TKPR1), found in Arabidopsis thaliana (Mouse-ear cress).